Here is a 275-residue protein sequence, read N- to C-terminus: Shikimate dehydrogenase (NADP(+)) (275 aa).

Shikimate contacts are provided by residues 17 to 19 and T64; that span reads SKS. The Proton acceptor role is filled by K68. E80 is an NADP(+) binding site. The shikimate site is built by N89 and D105. NADP(+) contacts are provided by residues 129-133, 152-157, and M216; these read GAGGA and NRTFFK. Y218 contributes to the shikimate binding site. Residue G240 coordinates NADP(+).

This sequence belongs to the shikimate dehydrogenase family. In terms of assembly, homodimer.

The enzyme catalyses shikimate + NADP(+) = 3-dehydroshikimate + NADPH + H(+). Its pathway is metabolic intermediate biosynthesis; chorismate biosynthesis; chorismate from D-erythrose 4-phosphate and phosphoenolpyruvate: step 4/7. Involved in the biosynthesis of the chorismate, which leads to the biosynthesis of aromatic amino acids. Catalyzes the reversible NADPH linked reduction of 3-dehydroshikimate (DHSA) to yield shikimate (SA). The protein is Shikimate dehydrogenase (NADP(+)) of Pectobacterium atrosepticum (strain SCRI 1043 / ATCC BAA-672) (Erwinia carotovora subsp. atroseptica).